Consider the following 110-residue polypeptide: uncharacterized protein (110 aa).

This is an uncharacterized protein from Archaeoglobus fulgidus (strain ATCC 49558 / DSM 4304 / JCM 9628 / NBRC 100126 / VC-16).